A 1153-amino-acid polypeptide reads, in one-letter code: Error-prone DNA polymerase (1153 aa).

The segment at 1107–1153 is disordered; it reads DELIAPSASTEREAPLNDDRRDHPDLPAQQIRHPRNVRILPPSRDFH. Over residues 1116 to 1131 the composition is skewed to basic and acidic residues; that stretch reads TEREAPLNDDRRDHPD.

This sequence belongs to the DNA polymerase type-C family. DnaE2 subfamily.

Its subcellular location is the cytoplasm. It carries out the reaction DNA(n) + a 2'-deoxyribonucleoside 5'-triphosphate = DNA(n+1) + diphosphate. In terms of biological role, DNA polymerase involved in damage-induced mutagenesis and translesion synthesis (TLS). It is not the major replicative DNA polymerase. The sequence is that of Error-prone DNA polymerase from Rhodopseudomonas palustris (strain BisA53).